The sequence spans 839 residues: Autophagy-related protein 9A (839 aa).

N-acetylalanine is present on Ala-2. At 2 to 61 the chain is on the cytoplasmic side; that stretch reads AQFDTEYQRLEASYSDSPPGEEDLLVHVAEGSKSPWHHIENLDLFFSRVYNLHQKNGFTC. Positions 8 to 11 match the Tyrosine-based sorting signal motif; that stretch reads YQRL. Phosphoserine occurs at positions 14, 16, and 18. A helical transmembrane segment spans residues 62–84; that stretch reads MLIGEMFELMQFLFVVAFTTFLV. Residues 85-128 lie on the Lumenal side of the membrane; it reads SCVDYDILFANKMVNHSLHPTEPVKVTLPDAFLPAQVCSARIQE. N-linked (GlcNAc...) asparagine glycosylation occurs at Asn-99. A helical transmembrane segment spans residues 129–154; it reads NGSLITILVIAGVFWIHRLIKFIYNI. The Cytoplasmic segment spans residues 155–290; the sequence is CCYWEIHSFY…ELAQRLSNRI (136 aa). Residues 291–301 lie within the membrane without spanning it; it reads LWIGIANFLLC. At 302–319 the chain is on the cytoplasmic side; sequence PLILIWQILYAFFSYAEV. An intramembrane segment occupies 320 to 328; it reads LKREPGALG. The Cytoplasmic portion of the chain corresponds to 329 to 371; it reads ARCWSLYGRCYLRHFNELEHELQSRLNRGYKPASKYMNCFLSP. A helical membrane pass occupies residues 372 to 397; that stretch reads LLTLLAKNGAFFAGSILAVLIALTIY. At 398-406 the chain is on the lumenal side; it reads DEDVLAVEH. The helical transmembrane segment at 407–424 threads the bilayer; the sequence is VLTTVTLLGVTVTVCRSF. At 425–470 the chain is on the cytoplasmic side; it reads IPDQHMVFCPEQLLRVILAHIHYMPDHWQGNAHRSQTRDEFAQLFQ. An intramembrane segment occupies 471–480; sequence YKAVFILEEL. The Cytoplasmic segment spans residues 481–483; sequence LSP. An intramembrane segment occupies 484-492; the sequence is IVTPLILIF. Residues 493 to 839 are Cytoplasmic-facing; sequence CLRPRALEII…DELPPQVHKV (347 aa). Ser-656 bears the Phosphoserine mark. 2 disordered regions span residues 657-686 and 717-839; these read PLQPGAAPQGRVPSTMTGSGVDARTASSGS and HKQQ…VHKV. A compositionally biased stretch (basic and acidic residues) spans 724 to 736; that stretch reads EPERHVWHRRESD. A phosphoserine mark is found at Ser-735, Ser-738, Ser-741, and Ser-828. Composition is skewed to acidic residues over residues 737–747 and 823–832; these read ESGESAPEEGG and VPEEGSEDEL.

It belongs to the ATG9 family. Homotrimer; forms a homotrimer with a central pore that forms a path between the two membrane leaflets. Interacts (via cytoplasmic its C-terminus) with ATG2A. Interacts with SUPT20H. Interacts (via the tyrosine-based sorting signal motif) with AP4M1; promoting association with the AP-4 complex. Interacts with ARFIP1 and ARFIP2. Interacts with ATG4A; the interaction is direct and promotes ATG9A trafficking. In terms of processing, ufmylated in a DDRGK1 dependent manner.

It is found in the preautophagosomal structure membrane. Its subcellular location is the cytoplasmic vesicle. The protein localises to the autophagosome membrane. It localises to the golgi apparatus. The protein resides in the trans-Golgi network membrane. It is found in the late endosome membrane. Its subcellular location is the recycling endosome membrane. The protein localises to the endoplasmic reticulum membrane. It localises to the mitochondrion membrane. The enzyme catalyses a 1,2-diacyl-sn-glycero-3-phosphocholine(in) = a 1,2-diacyl-sn-glycero-3-phosphocholine(out). It carries out the reaction a 1,2-diacyl-sn-glycero-3-phospho-L-serine(in) = a 1,2-diacyl-sn-glycero-3-phospho-L-serine(out). The catalysed reaction is a 1,2-diacyl-sn-glycero-3-phosphoethanolamine(in) = a 1,2-diacyl-sn-glycero-3-phosphoethanolamine(out). In terms of biological role, phospholipid scramblase involved in autophagy by mediating autophagosomal membrane expansion. Cycles between the preautophagosomal structure/phagophore assembly site (PAS) and the cytoplasmic vesicle pool and supplies membrane for the growing autophagosome. Lipid scramblase activity plays a key role in preautophagosomal structure/phagophore assembly by distributing the phospholipids that arrive through ATG2 (ATG2A or ATG2B) from the cytoplasmic to the luminal leaflet of the bilayer, thereby driving autophagosomal membrane expansion. Also required to supply phosphatidylinositol 4-phosphate to the autophagosome initiation site by recruiting the phosphatidylinositol 4-kinase beta (PI4KB) in a process dependent on ARFIP2, but not ARFIP1. In addition to autophagy, also plays a role in necrotic cell death. The sequence is that of Autophagy-related protein 9A from Mus musculus (Mouse).